The sequence spans 147 residues: Small ribosomal subunit protein uS5 (147 aa).

Positions 9-72 (FQEVVVNIGR…DDAFKNLIHV (64 aa)) constitute an S5 DRBM domain.

This sequence belongs to the universal ribosomal protein uS5 family. As to quaternary structure, part of the 30S ribosomal subunit. Contacts proteins S4 and S8.

With S4 and S12 plays an important role in translational accuracy. Its function is as follows. Located at the back of the 30S subunit body where it stabilizes the conformation of the head with respect to the body. The polypeptide is Small ribosomal subunit protein uS5 (Helicobacter pylori (strain J99 / ATCC 700824) (Campylobacter pylori J99)).